We begin with the raw amino-acid sequence, 591 residues long: Paxillin (591 aa).

Met-1 carries the N-acetylmethionine modification. Positions Asp-3–Thr-15 match the LD motif 1 motif. The interval His-17–Leu-138 is disordered. Position 31 is a phosphotyrosine; by PTK6 (Tyr-31). Positions Val-45–Ser-54 are enriched in pro residues. The span at Trp-69–Gln-101 shows a compositional bias: polar residues. 2 positions are modified to phosphoserine: Ser-83 and Ser-85. Tyr-88 carries the phosphotyrosine modification. Phosphoserine is present on Ser-106. Position 118 is a phosphotyrosine; by PTK6 (Tyr-118). Phosphoserine occurs at positions 119, 126, and 130. Polar residues predominate over residues Pro-121–Ser-137. Residue Thr-132 is modified to Phosphothreonine. Phosphoserine is present on residues Ser-137, Ser-140, and Ser-143. The LD motif 2 motif lies at Glu-144–Gln-156. The disordered stretch occupies residues Gln-156–Val-213. At Tyr-181 the chain carries Phosphotyrosine. The short motif at Ser-216–Val-228 is the LD motif 3 element. Ser-230 is modified (phosphoserine). Residues Val-237 to Ser-260 form a disordered region. At Ser-244 the chain carries Phosphoserine; by CDK5. Residues Ser-250, Ser-258, Ser-261, and Ser-272 each carry the phosphoserine modification. The short motif at Glu-265–Phe-276 is the LD motif 4 element. A compositionally biased stretch (basic and acidic residues) spans Arg-289 to Gly-300. The segment at Arg-289–Asp-335 is disordered. Ser-303, Ser-322, Ser-332, and Ser-340 each carry phosphoserine. The LD motif 5 signature appears at Gln-333–Leu-345. LIM zinc-binding domains lie at Gly-356 to Pro-415, Arg-416 to Ala-473, Pro-474 to Ser-533, and Leu-534 to Cys-591. Residue Ser-533 is modified to Phosphoserine.

This sequence belongs to the paxillin family. Binds to vinculin and to the SH3 domain of SRC. Interacts with GIT1, NUDT16L1/SDOS, PARVA, PARVB, SORBS1 and TGFB1I1. Component of cytoplasmic complexes, which also contain GIT1, ARHGEF6 and PAK1. Binds ASAP2. Interacts with RNF5 and PDCD10. Interacts with NEK3 and this interaction is prolactin-dependent. Interacts with PTK2/FAK1 and PTK2B/PYK2. Interacts with PTK6. Interacts with CD36. Interacts (via cytoplasmic domain) with CEACAM1; the interaction is phosphotyrosyl-dependent. Interacts with PXN; this complex stabilizes actin dynamics. Interacts with TRIM15. Interacts with PAK4; PAK4 acts as a scaffold to suppport PAXI phosphorylation at Ser-272. In terms of processing, phosphorylated by MAPK1/ERK2. Phosphorylated on tyrosine residues during integrin-mediated cell adhesion, embryonic development, fibroblast transformation and following stimulation of cells by mitogens. Phosphorylation at Ser-244 by CDK5 reduces its interaction with PTK2/FAK1 in matrix-cell focal adhesions (MCFA) during oligodendrocytes (OLs) differentiation. Phosphorylation at Tyr-31 and Tyr-118 by PTK6 promote the activation of RAC1 via CRK/CrKII, thereby promoting migration and invasion. Phosphorylation at Ser-250 by SLK is required for PXN redistribution and cell motility. Phosphorylation at Ser-272 promotes focal adhesion disassembly during cell migration.

The protein resides in the cytoplasm. It is found in the cytoskeleton. It localises to the cell junction. Its subcellular location is the focal adhesion. The protein localises to the cell cortex. In terms of biological role, cytoskeletal protein involved in actin-membrane attachment at sites of cell adhesion to the extracellular matrix (focal adhesion). Recruits other proteins such as TRIM15 to focal adhesion. This is Paxillin (PXN) from Pongo abelii (Sumatran orangutan).